The following is a 268-amino-acid chain: Shikimate dehydrogenase (NADP(+)) (268 aa).

Residues 13-15 (SLS) and Thr60 contribute to the shikimate site. The Proton acceptor role is filled by Lys64. Residue Asp76 participates in NADP(+) binding. Residues Asn85 and Asp100 each coordinate shikimate. NADP(+) is bound by residues 124–128 (GAGGA), 148–153 (NRTMSR), and Ile209. Tyr211 contributes to the shikimate binding site. Gly232 is an NADP(+) binding site.

The protein belongs to the shikimate dehydrogenase family. In terms of assembly, homodimer.

The catalysed reaction is shikimate + NADP(+) = 3-dehydroshikimate + NADPH + H(+). It participates in metabolic intermediate biosynthesis; chorismate biosynthesis; chorismate from D-erythrose 4-phosphate and phosphoenolpyruvate: step 4/7. In terms of biological role, involved in the biosynthesis of the chorismate, which leads to the biosynthesis of aromatic amino acids. Catalyzes the reversible NADPH linked reduction of 3-dehydroshikimate (DHSA) to yield shikimate (SA). This Staphylococcus haemolyticus (strain JCSC1435) protein is Shikimate dehydrogenase (NADP(+)).